The following is a 455-amino-acid chain: Bifunctional protein GlmU (455 aa).

The pyrophosphorylase stretch occupies residues 1-225 (MEVVILAAGQ…IWETLGVNSK (225 aa)). UDP-N-acetyl-alpha-D-glucosamine contacts are provided by residues 6-9 (LAAG), lysine 20, glutamine 71, 76-77 (GT), 98-100 (YGD), glycine 135, glutamate 150, asparagine 165, and asparagine 223. Aspartate 100 contributes to the Mg(2+) binding site. Asparagine 223 contributes to the Mg(2+) binding site. The tract at residues 226–246 (AQLAELERLHQRNIATRLMED) is linker. The segment at 247 to 455 (GVTLFDPSRI…KRPVKKKAGE (209 aa)) is N-acetyltransferase. Residues arginine 329 and lysine 347 each contribute to the UDP-N-acetyl-alpha-D-glucosamine site. Histidine 359 serves as the catalytic Proton acceptor. UDP-N-acetyl-alpha-D-glucosamine is bound by residues tyrosine 362 and asparagine 373. Acetyl-CoA-binding positions include alanine 376, 382–383 (NY), serine 401, alanine 419, and arginine 436.

This sequence in the N-terminal section; belongs to the N-acetylglucosamine-1-phosphate uridyltransferase family. It in the C-terminal section; belongs to the transferase hexapeptide repeat family. As to quaternary structure, homotrimer. Requires Mg(2+) as cofactor.

Its subcellular location is the cytoplasm. It carries out the reaction alpha-D-glucosamine 1-phosphate + acetyl-CoA = N-acetyl-alpha-D-glucosamine 1-phosphate + CoA + H(+). The enzyme catalyses N-acetyl-alpha-D-glucosamine 1-phosphate + UTP + H(+) = UDP-N-acetyl-alpha-D-glucosamine + diphosphate. It functions in the pathway nucleotide-sugar biosynthesis; UDP-N-acetyl-alpha-D-glucosamine biosynthesis; N-acetyl-alpha-D-glucosamine 1-phosphate from alpha-D-glucosamine 6-phosphate (route II): step 2/2. Its pathway is nucleotide-sugar biosynthesis; UDP-N-acetyl-alpha-D-glucosamine biosynthesis; UDP-N-acetyl-alpha-D-glucosamine from N-acetyl-alpha-D-glucosamine 1-phosphate: step 1/1. The protein operates within bacterial outer membrane biogenesis; LPS lipid A biosynthesis. Its function is as follows. Catalyzes the last two sequential reactions in the de novo biosynthetic pathway for UDP-N-acetylglucosamine (UDP-GlcNAc). The C-terminal domain catalyzes the transfer of acetyl group from acetyl coenzyme A to glucosamine-1-phosphate (GlcN-1-P) to produce N-acetylglucosamine-1-phosphate (GlcNAc-1-P), which is converted into UDP-GlcNAc by the transfer of uridine 5-monophosphate (from uridine 5-triphosphate), a reaction catalyzed by the N-terminal domain. The polypeptide is Bifunctional protein GlmU (Aromatoleum aromaticum (strain DSM 19018 / LMG 30748 / EbN1) (Azoarcus sp. (strain EbN1))).